Consider the following 475-residue polypeptide: Sulfate adenylyltransferase subunit 1 (475 aa).

Residues 25-239 enclose the tr-type G domain; sequence KSLLRFLTCG…EVLETVEIQR (215 aa). Residues 34–41 are G1; sequence GSVDDGKS. 34–41 is a binding site for GTP; the sequence is GSVDDGKS. The segment at 92–96 is G2; it reads GITID. The G3 stretch occupies residues 113 to 116; it reads DTPG. GTP contacts are provided by residues 113 to 117 and 168 to 171; these read DTPGH and NKMD. The tract at residues 168–171 is G4; sequence NKMD. The interval 206–208 is G5; it reads SAL.

Belongs to the TRAFAC class translation factor GTPase superfamily. Classic translation factor GTPase family. CysN/NodQ subfamily. Heterodimer composed of CysD, the smaller subunit, and CysN.

It catalyses the reaction sulfate + ATP + H(+) = adenosine 5'-phosphosulfate + diphosphate. It functions in the pathway sulfur metabolism; hydrogen sulfide biosynthesis; sulfite from sulfate: step 1/3. In terms of biological role, with CysD forms the ATP sulfurylase (ATPS) that catalyzes the adenylation of sulfate producing adenosine 5'-phosphosulfate (APS) and diphosphate, the first enzymatic step in sulfur assimilation pathway. APS synthesis involves the formation of a high-energy phosphoric-sulfuric acid anhydride bond driven by GTP hydrolysis by CysN coupled to ATP hydrolysis by CysD. The protein is Sulfate adenylyltransferase subunit 1 of Shigella dysenteriae serotype 1 (strain Sd197).